We begin with the raw amino-acid sequence, 341 residues long: Ribulose-5-phosphate reductase 1 (341 aa).

Positions 38, 64, 65, and 144 each coordinate Zn(2+).

Belongs to the zinc-containing alcohol dehydrogenase family. As to quaternary structure, heterodimer together with TarI. Can also form a dimer of heterodimers. Requires Zn(2+) as cofactor.

It catalyses the reaction D-ribitol 5-phosphate + NADP(+) = D-ribulose 5-phosphate + NADPH + H(+). Its pathway is cell wall biogenesis; poly(ribitol phosphate) teichoic acid biosynthesis. Functionally, catalyzes the NADPH dependent reduction of D-ribulose 5-phosphate to D-ribitol 5-phosphate. This is Ribulose-5-phosphate reductase 1 from Staphylococcus aureus (strain NCTC 8325 / PS 47).